Consider the following 364-residue polypeptide: MNRATATINVTALKHNLSQIKALAPKSLAWAMIKSNGYGHGLVRVAKALSDANAFGVACIDEALTLREVGIKSPIIVMKGFYNEAELSQFARHRLGAVIHCSDQVSLLEKTNLTSSLSVWLKIDTGMNRLGFSVEQSPAVYNQLKTSSSIQKPIGLMTHLADADNENKTFTELQIKRFFSVTEKMIGPKSIVNSAGFFAYPNALVDWIRPGIILYGISPFGINYNSFKEKIEKKFRPVMTLSAKIIAIKNRRQNDSVGYGCTWSCSEDMPIAIVSIGYGDGYPRHAPSGTPVLLNGKICPLIGRVSMDMIAIDLRSQPNAQVGDDVILWGEGLPVEIIAEKAGTIAYELLCKITQRVQFIEIEK.

The Proton acceptor; specific for D-alanine role is filled by K34. K34 is modified (N6-(pyridoxal phosphate)lysine). R129 lines the substrate pocket. The active-site Proton acceptor; specific for L-alanine is Y259. A substrate-binding site is contributed by M307.

This sequence belongs to the alanine racemase family. The cofactor is pyridoxal 5'-phosphate.

It carries out the reaction L-alanine = D-alanine. Its pathway is amino-acid biosynthesis; D-alanine biosynthesis; D-alanine from L-alanine: step 1/1. Its function is as follows. Catalyzes the interconversion of L-alanine and D-alanine. May also act on other amino acids. The chain is Alanine racemase (alr) from Coxiella burnetii (strain RSA 331 / Henzerling II).